A 235-amino-acid chain; its full sequence is UDP-2,3-diacylglucosamine hydrolase (235 aa).

Positions 9, 11, 42, 80, and 115 each coordinate Mn(2+). 80 to 81 (NR) lines the substrate pocket. Residues Asp-123, Ser-161, Lys-165, Lys-168, and His-196 each contribute to the substrate site. Residues His-196 and His-198 each contribute to the Mn(2+) site.

This sequence belongs to the LpxH family. The cofactor is Mn(2+).

It is found in the cell inner membrane. It carries out the reaction UDP-2-N,3-O-bis[(3R)-3-hydroxytetradecanoyl]-alpha-D-glucosamine + H2O = 2-N,3-O-bis[(3R)-3-hydroxytetradecanoyl]-alpha-D-glucosaminyl 1-phosphate + UMP + 2 H(+). Its pathway is glycolipid biosynthesis; lipid IV(A) biosynthesis; lipid IV(A) from (3R)-3-hydroxytetradecanoyl-[acyl-carrier-protein] and UDP-N-acetyl-alpha-D-glucosamine: step 4/6. In terms of biological role, hydrolyzes the pyrophosphate bond of UDP-2,3-diacylglucosamine to yield 2,3-diacylglucosamine 1-phosphate (lipid X) and UMP by catalyzing the attack of water at the alpha-P atom. Involved in the biosynthesis of lipid A, a phosphorylated glycolipid that anchors the lipopolysaccharide to the outer membrane of the cell. The polypeptide is UDP-2,3-diacylglucosamine hydrolase (Actinobacillus succinogenes (strain ATCC 55618 / DSM 22257 / CCUG 43843 / 130Z)).